Consider the following 257-residue polypeptide: MQKMTIHEAECLLQEIMNEEDERFQMLVKDERKGVQKLILKWYKQKELAQKEREKFLEMSKYENELREKGLTYIAGIDEVGRGPLAGPVVTAAVVLPEDFYIPGLNDSKKLSEAKRERFYDEIKDHAIAIGVGIISPQVIDEINIYQATKQAMLDAVANLSCTPEYLLIDAMKLPTSIPQTSIIKGDAKSVSISAASIIAKVTRDRMMKELGGKYPAYGFEQHMGYGTKQHLEAIEVHGVLEEHRKSFAPIKDMIQK.

The RNase H type-2 domain maps to 72–257 (TYIAGIDEVG…FAPIKDMIQK (186 aa)). Asp-78, Glu-79, and Asp-170 together coordinate a divalent metal cation.

It belongs to the RNase HII family. It depends on Mn(2+) as a cofactor. The cofactor is Mg(2+).

It is found in the cytoplasm. The enzyme catalyses Endonucleolytic cleavage to 5'-phosphomonoester.. Its function is as follows. Endonuclease that specifically degrades the RNA of RNA-DNA hybrids. This Bacillus mycoides (strain KBAB4) (Bacillus weihenstephanensis) protein is Ribonuclease HII.